A 199-amino-acid chain; its full sequence is Recombination protein RecR (199 aa).

A C4-type zinc finger spans residues 58 to 73; the sequence is CQTCHHLSAEPTCEIC. The 95-residue stretch at 81-175 folds into the Toprim domain; sequence GQICVVADSR…RVSRIAYGLP (95 aa).

It belongs to the RecR family.

May play a role in DNA repair. It seems to be involved in an RecBC-independent recombinational process of DNA repair. It may act with RecF and RecO. This is Recombination protein RecR from Synechococcus sp. (strain WH7803).